The primary structure comprises 493 residues: MLPYMDQVLRAFYQSTHWSTQNSYEDITATSRTLLDFRIPSAIHLQISNKSTPNTFNSLDFSTRSRINGSLSYLYSDAQQLEKFMRNSTDIPLQDATETYRQLQPNLNFSVSSANTLSSDNTTVDNDKKLLHDSKFVKKSLYYGRMYYPSSDLEAMIIKRLSPQTQFMLKGVSSFKESLNVLTCYFQRDSHRNLQEWIFSTSDLLCGYRVLHNFLTTPSKFNTSLYNNSSLSLGAEFWLGLVSLSPGCSTTLRYYTHSTNTGRPLTLTLSWNPLFGHISSTYSAKTGTNSTFCAKYDFNLYSIESNLSFGCEFWQKKHHLLETNKNNNDKLEPISDELVDINPNSRATKLLHENVPDLNSAVNDIPSTLDIPVHKQKLLNDLTYAFSSSLRKIDEERSTIEKFDNKINSSIFTSVWKLSTSLRDKTLKLLWEGKWRGFLISAGTELVFTRGFQESLSDDEKNDNAISISATDTENGNIPVFPAKFGIQFQYST.

Belongs to the MDM10 family. As to quaternary structure, component of the ER-mitochondria encounter structure (ERMES) or MDM complex, composed of MMM1, MDM10, MDM12 and MDM34. Associates with the mitochondrial outer membrane sorting assembly machinery SAM(core) complex, which consists of SAM35, SAM37 and SAM50, to form a SAM(holo) complex.

It localises to the mitochondrion outer membrane. Functionally, component of the ERMES/MDM complex, which serves as a molecular tether to connect the endoplasmic reticulum and mitochondria. Components of this complex are involved in the control of mitochondrial shape and protein biogenesis and may function in phospholipid exchange. MDM10 is involved in the late assembly steps of the general translocase of the mitochondrial outer membrane (TOM complex). Functions in the TOM40-specific route of the assembly of outer membrane beta-barrel proteins, including the association of TOM40 with the receptor TOM22 and small TOM proteins. Can associate with the SAM(core) complex as well as the MDM12-MMM1 complex, both involved in late steps of the major beta-barrel assembly pathway, that is responsible for biogenesis of all outer membrane beta-barrel proteins. May act as a switch that shuttles between both complexes and channels precursor proteins into the TOM40-specific pathway. Plays a role in mitochondrial morphology and in the inheritance of mitochondria. The polypeptide is Mitochondrial distribution and morphology protein 10 (Saccharomyces cerevisiae (strain ATCC 204508 / S288c) (Baker's yeast)).